Reading from the N-terminus, the 307-residue chain is MGDKGRSLKINKNMEEFTKVEEEMDVRRGPWTVEEDLELINYIASHGEGRWNSLARCAELKRTGKSCRLRWLNYLRPDVRRGNITLEEQLLILELHTRWGNRWSKIAQYLPGRTDNEIKNYWRTRVQKHAKQLKCDVNSQQFKDTMKYLWMPRLVERIQAASIGSVSMSSCVTTSSDQFVINNNNTNNVDNLALMSNPNGYITPDNSSVAVSPVSDLTECQVSSEVWKIGQDENLVDPKMTSPNYMDNSSGLLNGDFTKMQDQSDLNWFENINGMVPNYSDSFWNIGNDEDFWLLQQHQQVHDNGSF.

2 consecutive HTH myb-type domains span residues 23-79 and 80-130; these read EMDV…RPDV and RRGN…QKHA. 2 consecutive DNA-binding regions (H-T-H motif) follow at residues 51 to 75 and 103 to 126; these read WNSL…LNYL and WSKI…RTRV.

The protein localises to the nucleus. This Arabidopsis thaliana (Mouse-ear cress) protein is Transcription factor MYB78.